Consider the following 359-residue polypeptide: Peptide chain release factor 1 (359 aa).

Gln236 carries the N5-methylglutamine modification.

Belongs to the prokaryotic/mitochondrial release factor family. Post-translationally, methylated by PrmC. Methylation increases the termination efficiency of RF1.

It localises to the cytoplasm. Peptide chain release factor 1 directs the termination of translation in response to the peptide chain termination codons UAG and UAA. The chain is Peptide chain release factor 1 from Streptococcus pneumoniae serotype 19F (strain G54).